Here is a 228-residue protein sequence, read N- to C-terminus: Orotidine 5'-phosphate decarboxylase (228 aa).

Residues aspartate 20, lysine 42, 70–79, serine 127, 180–190, glycine 202, and arginine 203 each bind substrate; these read DFKVADIPET and PGVGAQGGDPG. Catalysis depends on lysine 72, which acts as the Proton donor.

This sequence belongs to the OMP decarboxylase family. Type 1 subfamily. As to quaternary structure, homodimer.

It carries out the reaction orotidine 5'-phosphate + H(+) = UMP + CO2. It functions in the pathway pyrimidine metabolism; UMP biosynthesis via de novo pathway; UMP from orotate: step 2/2. Catalyzes the decarboxylation of orotidine 5'-monophosphate (OMP) to uridine 5'-monophosphate (UMP). This is Orotidine 5'-phosphate decarboxylase (pyrF) from Methanothermobacter thermautotrophicus (strain ATCC 29096 / DSM 1053 / JCM 10044 / NBRC 100330 / Delta H) (Methanobacterium thermoautotrophicum).